A 515-amino-acid polypeptide reads, in one-letter code: MPTVVVMDVSLSMTRPVSVEGSEEYQRKHLAAHGLTMLFEHMATNYKLEFTALVVFSSLWELMVPFTRDYNTLQEALSNMDDYDKTCLESALVGVCNIVQQEWGGAIPCQVVLVTDGCLGIGRGSLRHSLATQNQRSESSRFPLPFPFPSKLYVMCMANLEELQSTDSLECLERLIDLNNGEGQIFTIDGPLCLKNVQSMFGKLIDLAYTPFHAALKCGHLTADVQVFPRPEPFVIDEEIDPIPKVINTDLEIVGFIDIADISSPPVLSRHLVLPIALNKEGDEVGAGITDDNEDENSANQIAGKIPNFCVLLHGSLKVEGMVALVQLGPEWHGMLYSQADSKKKSNLMMSLFEPGPEPLPWLGKMAQLGPISDAKENPYGEDDNKSPFPLQPKNKRSYAQNVTVWIKPSGLQTDVQKILRNARKLPEKTQTFYKELNRLRKAALAFGFLDLLKGVADMLERECTLLPDTAHPDAAFQLTHAAQQLKLASTEYAVYDLNITPLHTDFSGSSTERM.

Residues 2–204 (PTVVVMDVSL…KNVQSMFGKL (203 aa)) enclose the VWFA domain. 3 residues coordinate Mg(2+): Ser10, Ser12, and Thr86. Position 418 is an N6-acetyllysine (Lys418).

This sequence belongs to the Integrator subunit 14 family. In terms of assembly, component of the Integrator complex, composed of core subunits INTS1, INTS2, INTS3, INTS4, INTS5, INTS6, INTS7, INTS8, INTS9/RC74, INTS10, INTS11/CPSF3L, INTS12, INTS13, INTS14 and INTS15. The core complex associates with protein phosphatase 2A subunits PPP2CA and PPP2R1A, to form the Integrator-PP2A (INTAC) complex. INTS14 is part of the tail subcomplex, composed of INTS10, INTS13, INTS14 and INTS15.

Its subcellular location is the nucleus. Its function is as follows. Component of the integrator complex, a multiprotein complex that terminates RNA polymerase II (Pol II) transcription in the promoter-proximal region of genes. The integrator complex provides a quality checkpoint during transcription elongation by driving premature transcription termination of transcripts that are unfavorably configured for transcriptional elongation: the complex terminates transcription by (1) catalyzing dephosphorylation of the C-terminal domain (CTD) of Pol II subunit POLR2A/RPB1 and SUPT5H/SPT5, (2) degrading the exiting nascent RNA transcript via endonuclease activity and (3) promoting the release of Pol II from bound DNA. The integrator complex is also involved in terminating the synthesis of non-coding Pol II transcripts, such as enhancer RNAs (eRNAs), small nuclear RNAs (snRNAs), telomerase RNAs and long non-coding RNAs (lncRNAs). Within the integrator complex, INTS14 is part of the integrator tail module that acts as a platform for the recruitment of transcription factors at promoters. The protein is Integrator complex subunit 14 of Rattus norvegicus (Rat).